Here is a 79-residue protein sequence, read N- to C-terminus: Major outer membrane lipoprotein Lpp 2 (79 aa).

The first 21 residues, M1–G21, serve as a signal peptide directing secretion. Residue C22 is the site of N-palmitoyl cysteine attachment. C22 carries S-diacylglycerol cysteine lipidation. 2 repeats span residues N25–V35 and S39–V49. Residues I28–R69 are a coiled coil. K79 bears the N6-murein peptidoglycan lysine mark.

This sequence belongs to the Lpp family. In terms of assembly, homotrimer.

The protein localises to the cell outer membrane. Its subcellular location is the secreted. The protein resides in the cell wall. Functionally, a highly abundant outer membrane lipoprotein that controls the distance between the inner and outer membranes. The only protein known to be covalently linked to the peptidoglycan network (PGN). Also non-covalently binds the PGN. The link between the cell outer membrane and PGN contributes to maintenance of the structural and functional integrity of the cell envelope, and maintains the correct distance between the PGN and the outer membrane. In Salmonella typhi, this protein is Major outer membrane lipoprotein Lpp 2.